A 425-amino-acid polypeptide reads, in one-letter code: Enolase (425 aa).

A (2R)-2-phosphoglycerate-binding site is contributed by glutamine 163. Glutamate 205 acts as the Proton donor in catalysis. Positions 242, 285, and 312 each coordinate Mg(2+). The (2R)-2-phosphoglycerate site is built by lysine 337, arginine 366, serine 367, and lysine 388. Lysine 337 functions as the Proton acceptor in the catalytic mechanism.

Belongs to the enolase family. Mg(2+) is required as a cofactor.

The protein localises to the cytoplasm. It localises to the secreted. It is found in the cell surface. It carries out the reaction (2R)-2-phosphoglycerate = phosphoenolpyruvate + H2O. It participates in carbohydrate degradation; glycolysis; pyruvate from D-glyceraldehyde 3-phosphate: step 4/5. Catalyzes the reversible conversion of 2-phosphoglycerate (2-PG) into phosphoenolpyruvate (PEP). It is essential for the degradation of carbohydrates via glycolysis. The protein is Enolase of Rhodospirillum rubrum (strain ATCC 11170 / ATH 1.1.1 / DSM 467 / LMG 4362 / NCIMB 8255 / S1).